Consider the following 443-residue polypeptide: Xaa-Pro dipeptidase (443 aa).

The Mn(2+) site is built by Asp-246, Asp-257, His-339, Glu-384, and Glu-423.

This sequence belongs to the peptidase M24B family. Bacterial-type prolidase subfamily. The cofactor is Mn(2+).

It carries out the reaction Xaa-L-Pro dipeptide + H2O = an L-alpha-amino acid + L-proline. Splits dipeptides with a prolyl residue in the C-terminal position. The chain is Xaa-Pro dipeptidase from Edwardsiella ictaluri (strain 93-146).